The following is a 432-amino-acid chain: Peptidase B (432 aa).

Residues Lys196 and Asp201 each contribute to the Mn(2+) site. Lys208 is a catalytic residue. Mn(2+) contacts are provided by Asp219, Asp278, and Glu280. The active site involves Arg282.

Belongs to the peptidase M17 family. As to quaternary structure, homohexamer. It depends on Mn(2+) as a cofactor.

The protein localises to the cytoplasm. It carries out the reaction Release of an N-terminal amino acid, Xaa, from a peptide or arylamide. Xaa is preferably Glu or Asp but may be other amino acids, including Leu, Met, His, Cys and Gln.. Functionally, probably plays an important role in intracellular peptide degradation. The sequence is that of Peptidase B from Vibrio parahaemolyticus serotype O3:K6 (strain RIMD 2210633).